The primary structure comprises 272 residues: Dermonecrotic toxin StSicTox-betaIC1 (272 aa).

The active site involves histidine 5. Mg(2+) is bound by residues glutamate 25 and aspartate 27. Residue histidine 41 is the Nucleophile of the active site. 2 cysteine pairs are disulfide-bonded: cysteine 45-cysteine 51 and cysteine 47-cysteine 191. Position 85 (aspartate 85) interacts with Mg(2+).

Belongs to the arthropod phospholipase D family. Class II subfamily. Class IIb sub-subfamily. Mg(2+) is required as a cofactor. In terms of tissue distribution, expressed by the venom gland.

The protein localises to the secreted. The catalysed reaction is an N-(acyl)-sphingosylphosphocholine = an N-(acyl)-sphingosyl-1,3-cyclic phosphate + choline. The enzyme catalyses N-hexanoyl-sphing-4-enine-1-phosphocholine = N-(hexanoyl)-sphing-4-enine-1,3-cyclic phosphate + choline. It catalyses the reaction an N-(acyl)-sphingosylphosphoethanolamine = an N-(acyl)-sphingosyl-1,3-cyclic phosphate + ethanolamine. It carries out the reaction N-dodecanoyl-heptadecasphing-4-enine-1-phosphoethanolamine = N-dodecanoyl-heptadecasphing-4-enine-1,3-cyclic phosphate + ethanolamine. The catalysed reaction is a 1-acyl-sn-glycero-3-phosphoethanolamine = a 1-acyl-sn-glycero-2,3-cyclic phosphate + ethanolamine. The enzyme catalyses 1-tetradecanoyl-sn-glycero-3-phosphoethanolamine = 1-tetradecanoyl-sn-glycero-2,3-cyclic phosphate + ethanolamine. Dermonecrotic toxins cleave the phosphodiester linkage between the phosphate and headgroup of certain phospholipids (sphingolipid and lysolipid substrates), forming an alcohol (often choline) and a cyclic phosphate. This toxin acts on lysophosphatidylethanolamine (LPE) and ceramide phosphoethanolamine (CPE) with high activity. This toxin acts on sphingomyelin (SM) with very low activity and is not active on lysophosphatidylserine (LPS), lysophosphatidylcholine (LPC) and lysophosphatidylglycerol (LPG). It acts by transphosphatidylation, releasing exclusively cyclic phosphate as second products. It is not surprising that spider toxins have affinity for ethanolamine-containing sphingolipids since they are common in insect prey. Induces dermonecrosis, hemolysis, increased vascular permeability, edema, inflammatory response, and platelet aggregation. The protein is Dermonecrotic toxin StSicTox-betaIC1 of Sicarius terrosus (Cave spider).